The chain runs to 276 residues: Protein G1 (276 aa).

2 disordered regions span residues 1-30 and 178-213; these read MSSSSAAALGSDDGCSPAELRPSRYESQKR and SYHKKKKRRGGNMNGARGGGGGGARAGVNDGDATAP. The segment covering 21 to 30 has biased composition (basic and acidic residues); sequence RPSRYESQKR. Residues 24–183 enclose the ALOG domain; sequence RYESQKRRDW…ARGISYHKKK (160 aa). The span at 178–187 shows a compositional bias: basic residues; sequence SYHKKKKRRG. The short motif at 181-185 is the Nuclear localization signal element; it reads KKKKR. Positions 189–202 are enriched in gly residues; the sequence is NMNGARGGGGGGAR. Positions 203 to 213 are enriched in low complexity; that stretch reads AGVNDGDATAP.

This sequence belongs to the plant homeotic and developmental regulators ALOG protein family. In terms of tissue distribution, expressed at the empty glumes of immature spikelets, which are lemmas of the sterile florets located at the lateral side of the spikelet, throughout their development.

It localises to the nucleus. In terms of biological role, probable transcription regulator that acts as a developmental regulator by promoting cell growth in response to light. Transcription regulator that restrains empty glumes growth, lemmas of the sterile florets located at the lateral side of the rice spikelet, to maintain their small size, probably by repressing lemma identity via transcription regulation. In Oryza sativa subsp. japonica (Rice), this protein is Protein G1 (G1).